The sequence spans 688 residues: Polyribonucleotide nucleotidyltransferase (688 aa).

2 residues coordinate Mg(2+): D484 and D490. A KH domain is found at 550–609 (PTTEIFNVAPDKIVEIIGQGGRVIKEIVEKFEVKIDLNKPSGEVKIMGNKERVLKTKEFI). The 63-residue stretch at 626–688 (DEVLEAQVKR…NKGKIALDLA (63 aa)) folds into the S1 motif domain.

This sequence belongs to the polyribonucleotide nucleotidyltransferase family. Mg(2+) serves as cofactor.

The protein resides in the cytoplasm. It catalyses the reaction RNA(n+1) + phosphate = RNA(n) + a ribonucleoside 5'-diphosphate. Functionally, involved in mRNA degradation. Catalyzes the phosphorolysis of single-stranded polyribonucleotides processively in the 3'- to 5'-direction. The protein is Polyribonucleotide nucleotidyltransferase of Helicobacter pylori (strain ATCC 700392 / 26695) (Campylobacter pylori).